Consider the following 304-residue polypeptide: Aspartate carbamoyltransferase catalytic subunit (304 aa).

Positions 49 and 50 each coordinate carbamoyl phosphate. L-aspartate is bound at residue lysine 77. Carbamoyl phosphate contacts are provided by arginine 99, histidine 127, and glutamine 130. Arginine 160 and arginine 211 together coordinate L-aspartate. Carbamoyl phosphate-binding residues include alanine 252 and proline 253.

This sequence belongs to the aspartate/ornithine carbamoyltransferase superfamily. ATCase family. In terms of assembly, heterododecamer (2C3:3R2) of six catalytic PyrB chains organized as two trimers (C3), and six regulatory PyrI chains organized as three dimers (R2).

The catalysed reaction is carbamoyl phosphate + L-aspartate = N-carbamoyl-L-aspartate + phosphate + H(+). It participates in pyrimidine metabolism; UMP biosynthesis via de novo pathway; (S)-dihydroorotate from bicarbonate: step 2/3. Its function is as follows. Catalyzes the condensation of carbamoyl phosphate and aspartate to form carbamoyl aspartate and inorganic phosphate, the committed step in the de novo pyrimidine nucleotide biosynthesis pathway. This chain is Aspartate carbamoyltransferase catalytic subunit, found in Bacillus mycoides (strain KBAB4) (Bacillus weihenstephanensis).